The following is a 339-amino-acid chain: N-acetyl-gamma-glutamyl-phosphate reductase 1 (339 aa).

Residue Cys-149 is part of the active site.

It belongs to the NAGSA dehydrogenase family. Type 1 subfamily.

It is found in the cytoplasm. The enzyme catalyses N-acetyl-L-glutamate 5-semialdehyde + phosphate + NADP(+) = N-acetyl-L-glutamyl 5-phosphate + NADPH + H(+). Its pathway is amino-acid biosynthesis; L-arginine biosynthesis; N(2)-acetyl-L-ornithine from L-glutamate: step 3/4. Catalyzes the NADPH-dependent reduction of N-acetyl-5-glutamyl phosphate to yield N-acetyl-L-glutamate 5-semialdehyde. The polypeptide is N-acetyl-gamma-glutamyl-phosphate reductase 1 (Lactiplantibacillus plantarum (strain ATCC BAA-793 / NCIMB 8826 / WCFS1) (Lactobacillus plantarum)).